Consider the following 2471-residue polypeptide: Neurogenic locus notch homolog protein 2 (2471 aa).

Positions Met-1–Ala-25 are cleaved as a signal peptide. 4 EGF-like domains span residues Leu-26–Gln-63, His-64–Gln-102, Thr-105–Gln-143, and Trp-144–Glu-180. Residues Leu-26–Gln-1677 are Extracellular-facing. Intrachain disulfides connect Cys-28–Cys-41, Cys-35–Cys-51, Cys-53–Cys-62, Cys-68–Cys-79, Cys-73–Cys-90, Cys-92–Cys-101, Cys-109–Cys-121, Cys-115–Cys-131, Cys-133–Cys-142, Cys-148–Cys-159, Cys-153–Cys-168, Cys-170–Cys-179, Cys-186–Cys-198, Cys-192–Cys-207, Cys-209–Cys-218, Cys-225–Cys-236, Cys-230–Cys-246, Cys-248–Cys-257, Cys-264–Cys-275, Cys-269–Cys-284, Cys-286–Cys-295, Cys-302–Cys-315, Cys-309–Cys-324, Cys-326–Cys-335, Cys-342–Cys-353, Cys-347–Cys-362, Cys-364–Cys-373, Cys-379–Cys-390, Cys-384–Cys-401, Cys-403–Cys-412, Cys-419–Cys-433, Cys-427–Cys-442, Cys-444–Cys-453, Cys-460–Cys-471, Cys-465–Cys-480, Cys-482–Cys-491, Cys-498–Cys-509, Cys-503–Cys-518, Cys-520–Cys-529, Cys-536–Cys-547, Cys-541–Cys-556, Cys-558–Cys-567, Cys-574–Cys-584, Cys-579–Cys-593, Cys-595–Cys-604, Cys-611–Cys-622, Cys-616–Cys-631, Cys-633–Cys-642, Cys-649–Cys-659, Cys-654–Cys-668, Cys-670–Cys-679, Cys-686–Cys-697, Cys-691–Cys-706, Cys-708–Cys-717, Cys-724–Cys-734, Cys-729–Cys-743, Cys-745–Cys-754, Cys-761–Cys-772, Cys-766–Cys-781, Cys-783–Cys-792, Cys-799–Cys-810, Cys-804–Cys-819, Cys-821–Cys-830, Cys-837–Cys-848, Cys-842–Cys-859, Cys-861–Cys-870, Cys-877–Cys-888, Cys-882–Cys-897, Cys-899–Cys-908, Cys-915–Cys-926, Cys-920–Cys-935, Cys-937–Cys-946, Cys-953–Cys-964, Cys-958–Cys-973, Cys-975–Cys-984, Cys-991–Cys-1002, Cys-996–Cys-1011, Cys-1013–Cys-1022, Cys-1029–Cys-1040, Cys-1034–Cys-1049, Cys-1051–Cys-1060, Cys-1067–Cys-1078, Cys-1072–Cys-1087, and Cys-1089–Cys-1098. Asn-46 is a glycosylation site (N-linked (GlcNAc...) asparagine). The N-linked (GlcNAc...) asparagine glycan is linked to Asn-155. The EGF-like 5; calcium-binding domain occupies Asp-182 to Asp-219. Positions Leu-221–Glu-258 constitute an EGF-like 6 domain. Residues Asn-260 to Thr-296 enclose the EGF-like 7; calcium-binding domain. The region spanning Asp-298–Ser-336 is the EGF-like 8; calcium-binding domain. One can recognise an EGF-like 9; calcium-binding domain in the interval Asn-338 to His-374. The 39-residue stretch at Leu-375–Thr-413 folds into the EGF-like 10 domain. The 40-residue stretch at Asp-415 to Glu-454 folds into the EGF-like 11; calcium-binding domain. The EGF-like 12; calcium-binding domain occupies Asp-456 to Glu-492. One can recognise an EGF-like 13; calcium-binding domain in the interval Glu-494 to Gln-530. In terms of domain architecture, EGF-like 14; calcium-binding spans Asp-532–Glu-568. Positions Asn-570 to Ser-605 constitute an EGF-like 15; calcium-binding domain. One can recognise an EGF-like 16; calcium-binding domain in the interval Gln-607 to Glu-643. Ser-613 is a glycosylation site (O-linked (Glc...) serine; alternate). O-linked (Xyl...) serine; alternate glycosylation occurs at Ser-613. Positions Asn-645–Asn-680 constitute an EGF-like 17; calcium-binding domain. An EGF-like 18; calcium-binding domain is found at Asp-682–Tyr-718. The 36-residue stretch at Gln-720–Glu-755 folds into the EGF-like 19 domain. Residue Asn-733 is glycosylated (N-linked (GlcNAc...) asparagine). The 37-residue stretch at Asp-757–Gln-793 folds into the EGF-like 20; calcium-binding domain. The EGF-like 21; calcium-binding domain occupies Asn-795–Gln-831. The region spanning Val-833–Thr-871 is the EGF-like 22 domain. The region spanning Asp-873–Glu-909 is the EGF-like 23; calcium-binding domain. Positions Asp-911 to Gln-947 constitute an EGF-like 24; calcium-binding domain. Positions Asp-949 to Glu-985 constitute an EGF-like 25; calcium-binding domain. The EGF-like 26; calcium-binding domain occupies Asn-987–Leu-1023. The EGF-like 27; calcium-binding domain maps to Glu-1025–Gln-1061. EGF-like domains follow at residues Leu-1063–Asp-1099 and Pro-1101–Glu-1147. Residue Asn-1102 is glycosylated (N-linked (GlcNAc...) asparagine). Cystine bridges form between Cys-1105-Cys-1126, Cys-1120-Cys-1135, Cys-1137-Cys-1146, Cys-1153-Cys-1164, Cys-1158-Cys-1173, Cys-1175-Cys-1184, Cys-1191-Cys-1202, Cys-1196-Cys-1211, Cys-1213-Cys-1222, Cys-1229-Cys-1241, Cys-1235-Cys-1250, Cys-1252-Cys-1261, Cys-1268-Cys-1281, Cys-1273-Cys-1290, Cys-1292-Cys-1301, Cys-1308-Cys-1319, Cys-1313-Cys-1331, Cys-1333-Cys-1342, Cys-1378-Cys-1389, Cys-1383-Cys-1400, Cys-1402-Cys-1411, Cys-1425-Cys-1448, Cys-1430-Cys-1443, and Cys-1439-Cys-1455. Residues Gln-1149 to Glu-1185 form the EGF-like 30; calcium-binding domain. The EGF-like 31; calcium-binding domain maps to Glu-1187 to Glu-1223. One can recognise an EGF-like 32; calcium-binding domain in the interval Asn-1225–Glu-1262. EGF-like domains follow at residues Asp-1264 to Glu-1302, Phe-1304 to Gln-1343, and Cys-1374 to Glu-1412. 3 LNR repeats span residues Cys-1425–Asn-1465, Cys-1466–Thr-1502, and Cys-1503–Glu-1544. Residues Cys-1425–Gln-1677 are negative regulatory region (NRR). Asn-1465 carries an N-linked (GlcNAc...) asparagine glycan. Cystine bridges form between Cys-1466-Cys-1489, Cys-1472-Cys-1484, Cys-1480-Cys-1496, Cys-1503-Cys-1527, Cys-1509-Cys-1522, Cys-1518-Cys-1534, and Cys-1632-Cys-1639. Residues Leu-1678–Ile-1698 form a helical membrane-spanning segment. Residues Met-1699–Ala-2471 lie on the Cytoplasmic side of the membrane. Phosphothreonine is present on Thr-1716. The disordered stretch occupies residues Thr-1754–Pro-1788. A compositionally biased stretch (acidic residues) spans Glu-1774–Pro-1783. Ser-1778 bears the Phosphoserine mark. Thr-1802 carries the phosphothreonine modification. Ser-1804 carries the post-translational modification Phosphoserine. At Thr-1808 the chain carries Phosphothreonine. ANK repeat units follow at residues Asp-1827–Ala-1871, Thr-1876–Ala-1905, Met-1909–Ala-1939, Asp-1943–Ala-1972, His-1976–Met-2005, and Lys-2009–Ile-2038. Phosphoserine occurs at positions 1842 and 1845. Phosphoserine occurs at positions 2070, 2078, and 2081. 2 disordered regions span residues Phe-2091–Pro-2168 and Val-2380–Ala-2471. A Phosphothreonine modification is found at Thr-2097. The segment covering Pro-2098–Ser-2107 has biased composition (basic residues). Composition is skewed to polar residues over residues Ala-2108–Pro-2117, Glu-2137–Pro-2150, Thr-2159–Pro-2168, and Ser-2388–Gly-2406. Positions Pro-2417–Pro-2445 are enriched in low complexity.

It belongs to the NOTCH family. Heterodimer of a C-terminal fragment N(TM) and an N-terminal fragment N(EC) which are probably linked by disulfide bonds. Interacts with MAML1, MAML2 and MAML3 which act as transcriptional coactivators for NOTCH2. Interacts with RELA/p65. Interacts with HIF1AN. Interacts (via ANK repeats) with TCIM, the interaction inhibits the nuclear translocation of NOTCH2 N2ICD. Interacts with CUL1, RBX1, SKP1 and FBXW7 that are SCF(FBXW7) E3 ubiquitin-protein ligase complex components. Interacts with MINAR1; this interaction increases MINAR1 stability and function. Interacts with NOTCH2NL (NOTCH2NLA, NOTCH2NLB and/or NOTCH2NLC); leading to enhance Notch signaling pathway in a non-cell-autonomous manner. Interacts with MDK; this interaction mediates a nuclear accumulation of NOTCH2 and therefore activation of NOTCH2 signaling leading to interaction between HES1 and STAT3. Interacts with MINAR2. Post-translationally, synthesized in the endoplasmic reticulum as an inactive form which is proteolytically cleaved by a furin-like convertase in the trans-Golgi network before it reaches the plasma membrane to yield an active, ligand-accessible form. Cleavage results in a C-terminal fragment N(TM) and a N-terminal fragment N(EC). Following ligand binding, it is cleaved by TNF-alpha converting enzyme (TACE) to yield a membrane-associated intermediate fragment called notch extracellular truncation (NEXT). This fragment is then cleaved by presenilin dependent gamma-secretase to release a notch-derived peptide containing the intracellular domain (NICD) from the membrane. Hydroxylated by HIF1AN. In terms of processing, can be either O-glucosylated or O-xylosylated at Ser-613 by POGLUT1. Post-translationally, phosphorylated by GSK3. GSK3-mediated phosphorylation is necessary for NOTCH2 recognition by FBXW7, ubiquitination and degradation via the ubiquitin proteasome pathway. As to expression, expressed in the brain, heart, kidney, lung, skeletal muscle and liver. Ubiquitously expressed in the embryo.

The protein resides in the cell membrane. Its subcellular location is the nucleus. The protein localises to the cytoplasm. Functionally, functions as a receptor for membrane-bound ligands Jagged-1 (JAG1), Jagged-2 (JAG2) and Delta-1 (DLL1) to regulate cell-fate determination. Upon ligand activation through the released notch intracellular domain (NICD) it forms a transcriptional activator complex with RBPJ/RBPSUH and activates genes of the enhancer of split locus. Affects the implementation of differentiation, proliferation and apoptotic programs. Involved in bone remodeling and homeostasis. In collaboration with RELA/p65 enhances NFATc1 promoter activity and positively regulates RANKL-induced osteoclast differentiation. Positively regulates self-renewal of liver cancer cells. This chain is Neurogenic locus notch homolog protein 2, found in Homo sapiens (Human).